Here is a 132-residue protein sequence, read N- to C-terminus: Agouti-signaling protein (132 aa).

The signal sequence occupies residues 1–22; the sequence is MDVTRLLLATLLVFLCFFTAYS. An N-linked (GlcNAc...) asparagine glycan is attached at asparagine 39. The disordered stretch occupies residues 62 to 88; that stretch reads ISRKEAEKKRSSKKEASMKKVARPRTP. Basic and acidic residues predominate over residues 63–79; sequence SRKEAEKKRSSKKEASM. 5 disulfide bridges follow: cysteine 93–cysteine 108, cysteine 100–cysteine 114, cysteine 107–cysteine 125, cysteine 111–cysteine 132, and cysteine 116–cysteine 123. The Agouti domain maps to 93 to 132; the sequence is CVATRDSCKPPAPACCDPCASCQCRFFRSACSCRVLSLNC.

Its subcellular location is the secreted. Involved in the regulation of melanogenesis. The binding of ASP to MC1R precludes alpha-MSH initiated signaling and thus blocks production of cAMP, leading to a down-regulation of eumelanogenesis (brown/black pigment) and thus increasing synthesis of pheomelanin (yellow/red pigment). This is Agouti-signaling protein (ASIP) from Chlorocebus aethiops (Green monkey).